The following is a 218-amino-acid chain: Protein-L-isoaspartate O-methyltransferase (218 aa).

Ser63 is an active-site residue.

The protein belongs to the methyltransferase superfamily. L-isoaspartyl/D-aspartyl protein methyltransferase family.

Its subcellular location is the cytoplasm. The enzyme catalyses [protein]-L-isoaspartate + S-adenosyl-L-methionine = [protein]-L-isoaspartate alpha-methyl ester + S-adenosyl-L-homocysteine. In terms of biological role, catalyzes the methyl esterification of L-isoaspartyl residues in peptides and proteins that result from spontaneous decomposition of normal L-aspartyl and L-asparaginyl residues. It plays a role in the repair and/or degradation of damaged proteins. The polypeptide is Protein-L-isoaspartate O-methyltransferase (Syntrophus aciditrophicus (strain SB)).